Consider the following 1571-residue polypeptide: Paternally-expressed gene 3 protein (1571 aa).

Disordered regions lie at residues 1–120 (MYHH…NPIQ) and 137–241 (AEDD…QERG). Basic and acidic residues-rich tracts occupy residues 35 to 56 (GSER…DRWP), 80 to 99 (FGLD…RSQD), 169 to 186 (PEAK…DESS), 193 to 215 (KFIK…ERPP), and 223 to 241 (DNWK…QERG). The segment at 199–265 (ARNPKSGRAR…DLASRSRALE (67 aa)) is 10 X 5 AA repeat of P-H-X-X-E. The interval 199–265 (ARNPKSGRAR…DLASRSRALE (67 aa)) is 3 X 5 AA repeat of P-H-D-D-K. 4 C2H2-type zinc fingers span residues 325-347 (YVCD…QIMH), 378-400 (FECK…RQIH), 436-458 (YECK…QKIH), and 520-542 (YECK…QKIH). The tract at residues 456 to 495 (KIHGRGNSDDRDNERERERDRLRARAREQRERERERERER) is disordered. Disordered regions lie at residues 585–649 (ALMG…LKFP), 672–713 (EAQK…TYEG), and 764–820 (REDA…AKKK). The span at 592–614 (SSEHQKNRSRRNFFEGRGFEKPF) shows a compositional bias: basic and acidic residues. Polar residues-rich tracts occupy residues 770 to 781 (GSSSSNYHTPNV) and 799 to 808 (DVTFSVPSSS). The segment covering 809 to 820 (VREHQKARAKKK) has biased composition (basic and acidic residues). The C2H2-type 5 zinc-finger motif lies at 850–872 (FECQECGEAFARRSELIEHQKIH). The segment at 937–1070 (FNAEEPHDKE…ESHGQEKVED (134 aa)) is disordered. Over residues 940 to 1070 (EEPHDKETHG…ESHGQEKVED (131 aa)) the composition is skewed to basic and acidic residues. 13 consecutive repeat copies span residues 942 to 946 (PHDKE), 967 to 971 (PHGDE), 987 to 991 (PHDDK), 992 to 996 (PHGQE), 997 to 1001 (PHDDK), 1002 to 1006 (PHGQE), 1007 to 1011 (PHDDK), 1012 to 1016 (PHGQE), 1017 to 1021 (PHGDE), 1022 to 1026 (PHGQE), 1027 to 1031 (PHGDE), 1032 to 1036 (PHDKE), and 1047 to 1051 (PHSEE). C2H2-type zinc fingers lie at residues 1091 to 1113 (YECQ…QDTH), 1147 to 1169 (YECP…QRVH), 1209 to 1231 (IRCR…MRQH), and 1266 to 1289 (FECT…TKVH). Residues 1317–1339 (YECKDCGQSFLDDTVIAERMVFH) form a C2H2-type 10; degenerate zinc finger. Positions 1373-1487 (NAEAAEPEVE…DQEIEVEEPY (115 aa)) are disordered. Acidic residues-rich tracts occupy residues 1377–1397 (AEPE…EVEA), 1405–1418 (EGPD…DGEA), and 1431–1485 (DADE…EVEE). 2 consecutive C2H2-type zinc fingers follow at residues 1488–1510 (YNCH…LKSH) and 1547–1569 (FKCD…QNSH).

It belongs to the krueppel C2H2-type zinc-finger protein family. As to quaternary structure, homodimer. Interacts with SIAH1A and SIAH2. Interacts with TRAF2. As to expression, brain, glial cells, neurons, skeletal muscle, uterus and placenta. In the placenta it is found in all trophoblast cells.

The protein localises to the nucleus. The protein resides in the cytoplasm. Induces apoptosis in cooperation with SIAH1A. Acts as a mediator between p53/TP53 and BAX in a neuronal death pathway that is activated by DNA damage. Acts synergistically with TRAF2 and inhibits TNF induced apoptosis through activation of NF-kappa-B. Plays a role in regulating maternal behavior and offspring growth. The sequence is that of Paternally-expressed gene 3 protein (Peg3) from Mus musculus (Mouse).